The chain runs to 147 residues: Small ribosomal subunit protein bS6m (147 aa).

Belongs to the bacterial ribosomal protein bS6 family. As to quaternary structure, component of the mitochondrial ribosome small subunit (28S) which comprises a 12S rRNA and about 30 distinct proteins.

The protein resides in the mitochondrion. The polypeptide is Small ribosomal subunit protein bS6m (mRpS6) (Drosophila melanogaster (Fruit fly)).